Reading from the N-terminus, the 317-residue chain is MKGLKNQIMKKTSLFICTLLFILSIVFYPKITFAYPFWAQQNYESPREATGKIVCANCHLAQMPTIAEVPQSVGADSVFKAVVKIPYKNDLKEIGADGSEVPLQVGAVVMLPDGFKLAPQERWTEEIKEETEGVYFTNYSEEKENIIIVGPLPGDTNKEIVFPVLSPDPSTNKEYHYGKYSLHIGGNRGRGQVYPTGDKSNNVVFTSSTSGTIDSIDIIEDGSYKVNIENDNGEITTEEVPVGPQLIVKAQDKINAGDPLTNDPNVGGFGQLDAEVVLQSPYRVIGLIAFFIGVGLTQILLVLKKKQVEKVQAAEGI.

A signal peptide spans 1–34 (MKGLKNQIMKKTSLFICTLLFILSIVFYPKITFA). Residues Tyr-35, Cys-55, Cys-58, and His-59 each contribute to the heme site. The chain crosses the membrane as a helical span at residues 284 to 304 (VIGLIAFFIGVGLTQILLVLK).

The protein belongs to the cytochrome f family. In terms of assembly, the 4 large subunits of the cytochrome b6-f complex are cytochrome b6, subunit IV (17 kDa polypeptide, PetD), cytochrome f and the Rieske protein, while the 4 small subunits are PetG, PetL, PetM and PetN. The complex functions as a dimer. Requires heme as cofactor.

It localises to the cellular thylakoid membrane. In terms of biological role, component of the cytochrome b6-f complex, which mediates electron transfer between photosystem II (PSII) and photosystem I (PSI), cyclic electron flow around PSI, and state transitions. The chain is Cytochrome f from Prochlorococcus marinus (strain MIT 9215).